Reading from the N-terminus, the 517-residue chain is Heat shock 70-related protein 5 (517 aa).

Belongs to the heat shock protein 70 family.

Functionally, may function in protein folding and assembly, and disassembly of protein complexes. The chain is Heat shock 70-related protein 5 from Dictyostelium discoideum (Social amoeba).